A 609-amino-acid polypeptide reads, in one-letter code: Phosphoenolpyruvate carboxykinase [GTP] (609 aa).

Substrate is bound by residues Arg-81 and 220–222 (YGG). The Mn(2+) site is built by Lys-229 and His-249. Ser-271 is a substrate binding site. 272 to 277 (ACGKTN) contacts GTP. Cys-273 is a catalytic residue. Position 296 (Asp-296) interacts with Mn(2+). Substrate is bound at residue 387-389 (NSR). GTP is bound by residues Arg-389, Arg-420, and 515 to 518 (FGEN).

Belongs to the phosphoenolpyruvate carboxykinase [GTP] family. In terms of assembly, monomer. Requires Mn(2+) as cofactor.

It localises to the cytoplasm. It carries out the reaction oxaloacetate + GTP = phosphoenolpyruvate + GDP + CO2. Its pathway is carbohydrate biosynthesis; gluconeogenesis. In terms of biological role, catalyzes the conversion of oxaloacetate (OAA) to phosphoenolpyruvate (PEP), the rate-limiting step in the metabolic pathway that produces glucose from lactate and other precursors derived from the citric acid cycle. In Mycobacterium ulcerans (strain Agy99), this protein is Phosphoenolpyruvate carboxykinase [GTP].